Consider the following 109-residue polypeptide: ATPase inhibitor mai-2, mitochondrial (109 aa).

Disordered stretches follow at residues 17–39 (RFST…SIRD) and 73–95 (QEVD…HQKR). The segment covering 21-35 (GGHGDGAGRGGGSGG) has biased composition (gly residues). Residues 45–109 (GKMEAAREDE…EAEERALGKE (65 aa)) are a coiled coil.

Belongs to the ATPase inhibitor family.

It localises to the mitochondrion. Thought to be a regulatory component of the ATP-synthesizing complex in the mitochondria. This Caenorhabditis briggsae protein is ATPase inhibitor mai-2, mitochondrial.